We begin with the raw amino-acid sequence, 277 residues long: MEMO1 family protein CTN_0605 (277 aa).

This sequence belongs to the MEMO1 family.

The sequence is that of MEMO1 family protein CTN_0605 from Thermotoga neapolitana (strain ATCC 49049 / DSM 4359 / NBRC 107923 / NS-E).